A 255-amino-acid chain; its full sequence is Phosphate import ATP-binding protein PstB (255 aa).

Residues 8-250 (IKSSNLNVHY…PGNKMTQDYI (243 aa)) enclose the ABC transporter domain. 40 to 47 (GPSGCGKS) is a binding site for ATP.

This sequence belongs to the ABC transporter superfamily. Phosphate importer (TC 3.A.1.7) family. In terms of assembly, the complex is composed of two ATP-binding proteins (PstB), two transmembrane proteins (PstC and PstA) and a solute-binding protein (PstS).

It is found in the cell inner membrane. The enzyme catalyses phosphate(out) + ATP + H2O = ADP + 2 phosphate(in) + H(+). In terms of biological role, part of the ABC transporter complex PstSACB involved in phosphate import. Responsible for energy coupling to the transport system. The chain is Phosphate import ATP-binding protein PstB from Pelagibacter ubique (strain HTCC1062).